The following is a 102-amino-acid chain: Integration host factor subunit beta (102 aa).

Belongs to the bacterial histone-like protein family. In terms of assembly, heterodimer of an alpha and a beta chain.

Its function is as follows. This protein is one of the two subunits of integration host factor, a specific DNA-binding protein that functions in genetic recombination as well as in transcriptional and translational control. In Rhodopseudomonas palustris (strain BisA53), this protein is Integration host factor subunit beta.